Reading from the N-terminus, the 144-residue chain is Large ribosomal subunit protein uL13 (144 aa).

Belongs to the universal ribosomal protein uL13 family. As to quaternary structure, part of the 50S ribosomal subunit.

In terms of biological role, this protein is one of the early assembly proteins of the 50S ribosomal subunit, although it is not seen to bind rRNA by itself. It is important during the early stages of 50S assembly. This is Large ribosomal subunit protein uL13 from Herpetosiphon aurantiacus (strain ATCC 23779 / DSM 785 / 114-95).